The primary structure comprises 263 residues: MPEGPEIRRAADNLEAAIKGKPLTDVWFAFAQLKPYESQLTGQLVTRIETRGKALLTHFSNGLTLYSHNQLYGVWRVIDTGEIPQTTRILRVRLQTADKTILLYSASDIEMLTAEQLTTHPFLQRVGPDVLDARLTPEEVKARLLSPRFRNRQFSGLLLDQAFLAGLGNYLRVEILWQVGLTGQHKAKDLNEAQLNALSHALLDIPRLSYTTRGQADENKHHGALFRFKVFHRDGEVCERCGGIIEKTTLSSRPFYWCPHCQK.

The Schiff-base intermediate with DNA role is filled by P2. E3 functions as the Proton donor in the catalytic mechanism. K53 acts as the Proton donor; for beta-elimination activity in catalysis. DNA is bound by residues Q70, R125, and N169. The FPG-type zinc-finger motif lies at 229 to 263 (KVFHRDGEVCERCGGIIEKTTLSSRPFYWCPHCQK). Residue R253 is the Proton donor; for delta-elimination activity of the active site.

Belongs to the FPG family. Zn(2+) is required as a cofactor.

It catalyses the reaction 2'-deoxyribonucleotide-(2'-deoxyribose 5'-phosphate)-2'-deoxyribonucleotide-DNA = a 3'-end 2'-deoxyribonucleotide-(2,3-dehydro-2,3-deoxyribose 5'-phosphate)-DNA + a 5'-end 5'-phospho-2'-deoxyribonucleoside-DNA + H(+). Involved in base excision repair of DNA damaged by oxidation or by mutagenic agents. Acts as a DNA glycosylase that recognizes and removes damaged bases. Has a preference for oxidized pyrimidines, such as thymine glycol, 5,6-dihydrouracil and 5,6-dihydrothymine. Has AP (apurinic/apyrimidinic) lyase activity and introduces nicks in the DNA strand. Cleaves the DNA backbone by beta-delta elimination to generate a single-strand break at the site of the removed base with both 3'- and 5'-phosphates. In Salmonella newport (strain SL254), this protein is Endonuclease 8.